A 609-amino-acid chain; its full sequence is Neutral protease (609 aa).

The signal sequence occupies residues 1-24; the sequence is MNKTQRHINWLLAVSAATALPVTA. A propeptide spanning residues 25–196 is cleaved from the precursor; the sequence is AEMINVNDGS…VLQTWDGLNH (172 aa). Zn(2+) is bound at residue His343. Glu344 is a catalytic residue. Positions 347 and 367 each coordinate Zn(2+). Catalysis depends on His426, which acts as the Proton donor.

This sequence belongs to the peptidase M4 family. The cofactor is Zn(2+).

Its subcellular location is the secreted. The enzyme catalyses Preferential cleavage of bonds with bulky hydrophobic groups in P2 and P1'. Phe at P1' is the most favored residue, which distinguished this enzyme from thermolysin.. Its function is as follows. Extracellular zinc metalloprotease. This chain is Neutral protease (nprV), found in Vibrio proteolyticus (Aeromonas proteolytica).